A 652-amino-acid chain; its full sequence is Phosphatidylinositol-binding clathrin assembly protein (652 aa).

Serine 2 carries the N-acetylserine modification. The region spanning 14–145 (QHSVTGSAVS…VSYRQVAFDF (132 aa)) is the ENTH domain. A phosphoserine mark is found at serine 16 and serine 20. The tract at residues 221–294 (KYFDMKKNQC…LEGKKIKDST (74 aa)) is interaction with PIMREG. A Glycyl lysine isopeptide (Lys-Gly) (interchain with G-Cter in SUMO2) cross-link involves residue lysine 238. Residues serine 303 and serine 315 each carry the phosphoserine modification. Residues 559–580 (KNDVNWSQPGEKKLTGGSNWQP) are disordered.

This sequence belongs to the PICALM/SNAP91 family. Binds to clathrin; involves primarily the C-terminal sequences, but the full-length protein is required for full binding capacity. Binds phosphatidylinositol 4,5- bisphosphate. Interacts with PIMREG; this interaction may change the subcellular location into the nucleus. Interacts with AP2A1 (via its alpha-appendage domain). Interacts (via N-terminus) with VAMP2; VAMP3; VAMP7 and VAMP8 (Via N-terminus). Interacts with LC3/MAP1LC3A. As to expression, expressed in all tissues examined.

It is found in the cell membrane. The protein resides in the membrane. The protein localises to the clathrin-coated pit. It localises to the golgi apparatus. Its subcellular location is the cytoplasmic vesicle. It is found in the clathrin-coated vesicle. The protein resides in the nucleus. Cytoplasmic adapter protein that plays a critical role in clathrin-mediated endocytosis which is important in processes such as internalization of cell receptors, synaptic transmission or removal of apoptotic cells. Recruits AP-2 and attaches clathrin triskelions to the cytoplasmic side of plasma membrane leading to clathrin-coated vesicles (CCVs) assembly. Furthermore, regulates clathrin-coated vesicle size and maturation by directly sensing and driving membrane curvature. In addition to binding to clathrin, mediates the endocytosis of small R-SNARES (Soluble NSF Attachment Protein REceptors) between plasma membranes and endosomes including VAMP2, VAMP3, VAMP4, VAMP7 or VAMP8. In turn, PICALM-dependent SNARE endocytosis is required for the formation and maturation of autophagic precursors. Modulates thereby autophagy and the turnover of autophagy substrates such as MAPT/TAU or amyloid precursor protein cleaved C-terminal fragment (APP-CTF). The protein is Phosphatidylinositol-binding clathrin assembly protein (PICALM) of Homo sapiens (Human).